The following is a 1201-amino-acid chain: Kinesin-like protein costa (1201 aa).

Positions 4-391 (PIQVAVRIFP…LQFAFKVQCV (388 aa)) constitute a Kinesin motor domain. Residues 23–92 (SFGPTEPKKD…NGNDSGQKDY (70 aa)) form a disordered region. Residues 28 to 56 (EPKKDAQAVDEGADSKDSEAQVPAAEKDN) show a composition bias toward basic and acidic residues. Residues 57-75 (PSISETDPNGNAEQDSAAD) are compositionally biased toward polar residues. Position 175–182 (175–182 (GQRGQGKS)) interacts with ATP. Disordered regions lie at residues 502 to 536 (AEEP…PDLD), 565 to 606 (HPKA…GASL), and 618 to 639 (ASQQ…ESSS). The span at 510–521 (SEAANSESPNSD) shows a compositional bias: low complexity. Phosphoserine occurs at positions 599 and 605. Coiled coils occupy residues 652–821 (AATA…ELVK) and 968–1001 (TKVI…ERVL).

Belongs to the TRAFAC class myosin-kinesin ATPase superfamily. Kinesin family. KIF27 subfamily. As to quaternary structure, homodimer (Potential). Binds microtubules. Interacts with ci, smo, sgg, CkIalpha and protein kinase A catalytic subunit. Interacts (via kinesin motor domain) with Ubr3. Post-translationally, polyubiquitinated by Ubr3, which leads to proteasomal degradation.

It is found in the cytoplasm. The protein localises to the cytoskeleton. Functionally, regulates cubitus interruptus (ci) processing by recruiting multiple kinases to promote its efficient phosphorylation. Scaffolds multiple kinases and ci into proximity to promote its hyperphosphorylation, which then targets it for SCFSlimb/proteasome-mediated processing to generate its repressor form. Hh signaling inhibits ci phosphorylation by interfering with the cos-ci-kinases complex formation. Negatively regulates hh-signaling pathways during various processes, including photoreceptor differentiation. May negatively regulate a hh-signaling pathway which functions in the intestinal immune response to bacterial uracil by activating the Duox-dependent production of reactive oxygen species (ROS). This chain is Kinesin-like protein costa (cos), found in Drosophila melanogaster (Fruit fly).